The primary structure comprises 425 residues: MDRNQQLFERAKHVIPGGVNSPVRAFGSVGGSPRFIKRAQGAYMWDADDRRLIDYIGSWGPMILGHAHPAVVEAVQQAAVHGLSFGTPTEAEIGIAEEICKLMPSIERVRLVSSGTEATMSAIRLARGFTGRDAIIKFEGCYHGHSDSLLVKAGSGLLTFGNPSSAGVPEDFTRHTLVLEYNNVEQLERTFAEIGERIACVILEPVAGNMNLIRPSAAFVQALRTLTQQHGSVLIYDEVMTGFRVALGGAQSLHGIQPDLTTLGKVVGGGMPIGAFGGRADIMNCIAPLGSVYQAGTLSGNPVAVAAGLATLRLIQQPGFYDALAARTARLVDGMVAAAREAGIPFSGDCVGGMFGLYFAADVPTSYAEVTASDRERFNAFFHAMLEAGVYLAPSAYEAGFVSAAHTDADIDATVDAARQAFARI.

An N6-(pyridoxal phosphate)lysine modification is found at Lys-265.

This sequence belongs to the class-III pyridoxal-phosphate-dependent aminotransferase family. HemL subfamily. As to quaternary structure, homodimer. Pyridoxal 5'-phosphate serves as cofactor.

Its subcellular location is the cytoplasm. It catalyses the reaction (S)-4-amino-5-oxopentanoate = 5-aminolevulinate. It functions in the pathway porphyrin-containing compound metabolism; protoporphyrin-IX biosynthesis; 5-aminolevulinate from L-glutamyl-tRNA(Glu): step 2/2. This chain is Glutamate-1-semialdehyde 2,1-aminomutase, found in Laribacter hongkongensis (strain HLHK9).